The primary structure comprises 224 residues: Transmembrane emp24 domain-containing protein 7 (224 aa).

Positions 1 to 34 are cleaved as a signal peptide; it reads MPRPGSAQRWAAVAGRWGCRLLALLLLVPGPGGA. Residues 35–187 are Lumenal-facing; it reads SEITFELPDN…RAEDLNTRVA (153 aa). The region spanning 46 to 128 is the GOLD domain; the sequence is KQCFYEDIAQ…HKTVYFDFQV (83 aa). N103 carries N-linked (GlcNAc...) asparagine glycosylation. The helical transmembrane segment at 188–208 threads the bilayer; sequence YWSVGEALILLVVSIGQVFLL. The Cytoplasmic portion of the chain corresponds to 209-224; that stretch reads KSFFSDKRTTTTRVGS. A COPII vesicle coat-binding motif is present at residues 211 to 212; that stretch reads FF. Positions 211–224 match the COPI vesicle coat-binding motif; that stretch reads FFSDKRTTTTRVGS.

Belongs to the EMP24/GP25L family. Predominantly monomeric and to lesser extent homodimeric in endoplasmic reticulum, endoplasmic reticulum-Golgi intermediate compartment and cis-Golgi network. Oligomerizes with other members of the EMP24/GP25L family such as TMED2, TMED9 and TMED10. Interacts (via C-terminus) with COPG1; the interaction involves dimeric TMED7. Post-translationally, N-linked glycosylated in complex form containing terminal sialic acid.

The protein resides in the endoplasmic reticulum membrane. It localises to the golgi apparatus. The protein localises to the cis-Golgi network membrane. It is found in the endoplasmic reticulum-Golgi intermediate compartment membrane. Its subcellular location is the cytoplasmic vesicle. The protein resides in the COPI-coated vesicle membrane. It localises to the COPII-coated vesicle membrane. Potential role in vesicular protein trafficking, mainly in the early secretory pathway. Appears to play a role in the biosynthesis of secreted cargo including processing and post-translational modifications. This Homo sapiens (Human) protein is Transmembrane emp24 domain-containing protein 7 (TMED7).